The following is a 287-amino-acid chain: Phosphatidylserine decarboxylase proenzyme (287 aa).

Active-site charge relay system; for autoendoproteolytic cleavage activity residues include D90, H147, and S253. The active-site Schiff-base intermediate with substrate; via pyruvic acid; for decarboxylase activity is S253. Position 253 is a pyruvic acid (Ser); by autocatalysis (S253).

Belongs to the phosphatidylserine decarboxylase family. PSD-B subfamily. Prokaryotic type I sub-subfamily. Heterodimer of a large membrane-associated beta subunit and a small pyruvoyl-containing alpha subunit. It depends on pyruvate as a cofactor. Is synthesized initially as an inactive proenzyme. Formation of the active enzyme involves a self-maturation process in which the active site pyruvoyl group is generated from an internal serine residue via an autocatalytic post-translational modification. Two non-identical subunits are generated from the proenzyme in this reaction, and the pyruvate is formed at the N-terminus of the alpha chain, which is derived from the carboxyl end of the proenzyme. The autoendoproteolytic cleavage occurs by a canonical serine protease mechanism, in which the side chain hydroxyl group of the serine supplies its oxygen atom to form the C-terminus of the beta chain, while the remainder of the serine residue undergoes an oxidative deamination to produce ammonia and the pyruvoyl prosthetic group on the alpha chain. During this reaction, the Ser that is part of the protease active site of the proenzyme becomes the pyruvoyl prosthetic group, which constitutes an essential element of the active site of the mature decarboxylase.

The protein localises to the cell membrane. The catalysed reaction is a 1,2-diacyl-sn-glycero-3-phospho-L-serine + H(+) = a 1,2-diacyl-sn-glycero-3-phosphoethanolamine + CO2. The protein operates within phospholipid metabolism; phosphatidylethanolamine biosynthesis; phosphatidylethanolamine from CDP-diacylglycerol: step 2/2. Catalyzes the formation of phosphatidylethanolamine (PtdEtn) from phosphatidylserine (PtdSer). The protein is Phosphatidylserine decarboxylase proenzyme of Aliivibrio salmonicida (strain LFI1238) (Vibrio salmonicida (strain LFI1238)).